A 209-amino-acid polypeptide reads, in one-letter code: Large ribosomal subunit protein uL3 (209 aa).

Residues 127–164 (NFSGGQRTHGQSDRLRAPGSVGGASDPSRTFKGTKMGG) form a disordered region.

It belongs to the universal ribosomal protein uL3 family. Part of the 50S ribosomal subunit. Forms a cluster with proteins L14 and L19.

In terms of biological role, one of the primary rRNA binding proteins, it binds directly near the 3'-end of the 23S rRNA, where it nucleates assembly of the 50S subunit. The protein is Large ribosomal subunit protein uL3 of Chlorobium phaeobacteroides (strain BS1).